A 208-amino-acid chain; its full sequence is Thymidylate kinase (208 aa).

An ATP-binding site is contributed by 10–17 (GIDGSGKT).

This sequence belongs to the thymidylate kinase family.

It catalyses the reaction dTMP + ATP = dTDP + ADP. Functionally, phosphorylation of dTMP to form dTDP in both de novo and salvage pathways of dTTP synthesis. In Ligilactobacillus salivarius (strain UCC118) (Lactobacillus salivarius), this protein is Thymidylate kinase.